We begin with the raw amino-acid sequence, 1205 residues long: PAN2-PAN3 deadenylation complex catalytic subunit Pan2 (1205 aa).

4 WD repeats span residues 153-193, 195-231, 244-280, and 328-367; these read DESE…QKYA, ETPGVTIMRQTNRFFFCGHTSGKVSLRDLRSFKVEHE, VHGNLLAACGFSSRLTGLACDRFLKVYDLRMMRAITP, and PVGPLLMTFDVSASKQALAFGDSEGCVHLWTDSPEPSFNP. The segment at 368–484 is linker; sequence YSRETEFALP…PTGREEEPLH (117 aa). The region spanning 485 to 924 is the USP domain; the sequence is TVSKKYRKVT…VPAILYYVKR (440 aa). Ser784 carries the phosphoserine modification. Residues 975–1147 form the Exonuclease domain; that stretch reads VGLDAEFVTL…EDARTALQLY (173 aa). Positions 978, 980, 1087, and 1139 each coordinate a divalent metal cation. The tract at residues 1179-1205 is disordered; the sequence is WKVPEPESQSSPKSKAGLRPGALGWVG. The segment covering 1184–1193 has biased composition (low complexity); the sequence is PESQSSPKSK. Ser1189 carries the post-translational modification Phosphoserine.

This sequence belongs to the peptidase C19 family. PAN2 subfamily. Forms a heterotrimer with an asymmetric homodimer of the regulatory subunit PAN3 to form the poly(A)-nuclease (PAN) deadenylation complex. Interacts with PAN3 isoform 1/Pan3L and isoform 3/Pan3S. Interacts with ZFP36. The cofactor is a divalent metal cation.

Its subcellular location is the cytoplasm. The protein localises to the P-body. The protein resides in the nucleus. It carries out the reaction Exonucleolytic cleavage of poly(A) to 5'-AMP.. Its activity is regulated as follows. Positively regulated by the regulatory subunit PAN3. Functionally, catalytic subunit of the poly(A)-nuclease (PAN) deadenylation complex, one of two cytoplasmic mRNA deadenylases involved in general and miRNA-mediated mRNA turnover. PAN specifically shortens poly(A) tails of RNA and the activity is stimulated by poly(A)-binding protein (PABP). PAN deadenylation is followed by rapid degradation of the shortened mRNA tails by the CCR4-NOT complex. Deadenylated mRNAs are then degraded by two alternative mechanisms, namely exosome-mediated 3'-5' exonucleolytic degradation, or deadenylation-dependent mRNA decaping and subsequent 5'-3' exonucleolytic degradation by XRN1. Also acts as an important regulator of the HIF1A-mediated hypoxic response. Required for HIF1A mRNA stability independent of poly(A) tail length regulation. The chain is PAN2-PAN3 deadenylation complex catalytic subunit Pan2 from Rattus norvegicus (Rat).